We begin with the raw amino-acid sequence, 441 residues long: Ribosomal protein uS12 methylthiotransferase RimO (441 aa).

In terms of domain architecture, MTTase N-terminal spans 8-118 (PKIGFVSLGC…VLEHVHHYVP (111 aa)). C17, C53, C82, C150, C154, and C157 together coordinate [4Fe-4S] cluster. The Radical SAM core domain maps to 136–373 (LTPRHYAYLK…MQLQQQISAE (238 aa)). Residues 376-441 (QEKVGKEILV…DEYDLWGSRV (66 aa)) form the TRAM domain.

This sequence belongs to the methylthiotransferase family. RimO subfamily. The cofactor is [4Fe-4S] cluster.

Its subcellular location is the cytoplasm. It carries out the reaction L-aspartate(89)-[ribosomal protein uS12]-hydrogen + (sulfur carrier)-SH + AH2 + 2 S-adenosyl-L-methionine = 3-methylsulfanyl-L-aspartate(89)-[ribosomal protein uS12]-hydrogen + (sulfur carrier)-H + 5'-deoxyadenosine + L-methionine + A + S-adenosyl-L-homocysteine + 2 H(+). Its function is as follows. Catalyzes the methylthiolation of an aspartic acid residue of ribosomal protein uS12. In Escherichia fergusonii (strain ATCC 35469 / DSM 13698 / CCUG 18766 / IAM 14443 / JCM 21226 / LMG 7866 / NBRC 102419 / NCTC 12128 / CDC 0568-73), this protein is Ribosomal protein uS12 methylthiotransferase RimO.